The sequence spans 330 residues: Beta-ketoacyl-[acyl-carrier-protein] synthase III (330 aa).

Active-site residues include cysteine 114 and histidine 255. The segment at 256-260 (QANQR) is ACP-binding. Residue asparagine 285 is part of the active site.

Belongs to the thiolase-like superfamily. FabH family. Homodimer.

It is found in the cytoplasm. It catalyses the reaction malonyl-[ACP] + acetyl-CoA + H(+) = 3-oxobutanoyl-[ACP] + CO2 + CoA. It participates in lipid metabolism; fatty acid biosynthesis. Its function is as follows. Catalyzes the condensation reaction of fatty acid synthesis by the addition to an acyl acceptor of two carbons from malonyl-ACP. Catalyzes the first condensation reaction which initiates fatty acid synthesis and may therefore play a role in governing the total rate of fatty acid production. Possesses both acetoacetyl-ACP synthase and acetyl transacylase activities. Its substrate specificity determines the biosynthesis of branched-chain and/or straight-chain of fatty acids. The protein is Beta-ketoacyl-[acyl-carrier-protein] synthase III of Trichormus variabilis (strain ATCC 29413 / PCC 7937) (Anabaena variabilis).